Reading from the N-terminus, the 506-residue chain is MFPRSILLALSLTAVALGQQVGTNMAENHPSLTWQRCTSSGCQNVNGKVTLDANWRWTHRINDFTNCYTGNEWDTSICPDGVTCAENCALDGADYAGTYGVTSSGTALTLKFVTESQQKNIGSRLYLMADDSNYEIFNLLNKEFTFDVDVSKLPCGLNGALYFSEMAADGGMSSTNTAGAKYGTGYCDSQCPRDIKFIDGEANSEGWEGSPNDVNAGTGNFGACCGEMDIWEANSISSAYTPHPCREPGLQRCEGNTCSVNDRYATECDPDGCDFNSFRMGDKSFYGPGMTVDTNQPITVVTQFITDNGSDNGNLQEIRRIYVQNGQVIQNSNVNIPGIDSGNSISAEFCDQAKEAFGDERSFQDRGGLSGMGSALDRGMVLVLSIWDDHAVNMLWLDSDYPLDASPSQPGISRGTCSRDSGKPEDVEANAGGVQVVYSNIKFGDINSTFNNNGGGGGNPSPTTTRPNSPAQTMWGQCGGQGWTGPTACQSPSTCHVINDFYSQCF.

The first 18 residues, 1–18 (MFPRSILLALSLTAVALG), serve as a signal peptide directing secretion. The interval 19-450 (QQVGTNMAEN…IKFGDINSTF (432 aa)) is catalytic. The active-site Nucleophile is E227. Catalysis depends on E232, which acts as the Proton donor. Residue N308 is glycosylated (N-linked (GlcNAc...) asparagine). The disordered stretch occupies residues 405-426 (ASPSQPGISRGTCSRDSGKPED). Polar residues predominate over residues 406 to 419 (SPSQPGISRGTCSR). N447 carries N-linked (GlcNAc...) asparagine glycosylation. The disordered stretch occupies residues 449-472 (TFNNNGGGGGNPSPTTTRPNSPAQ). A linker region spans residues 451 to 473 (NNNGGGGGNPSPTTTRPNSPAQT). Over residues 460–470 (PSPTTTRPNSP) the composition is skewed to low complexity. Positions 470–506 (PAQTMWGQCGGQGWTGPTACQSPSTCHVINDFYSQCF) constitute a CBM1 domain. 2 disulfide bridges follow: C478–C495 and C489–C505.

Belongs to the glycosyl hydrolase 7 (cellulase C) family.

It catalyses the reaction Hydrolysis of (1-&gt;4)-beta-D-glucosidic linkages in cellulose and cellotetraose, releasing cellobiose from the non-reducing ends of the chains.. Functionally, the biological conversion of cellulose to glucose generally requires three types of hydrolytic enzymes: (1) Endoglucanases which cut internal beta-1,4-glucosidic bonds; (2) Exocellobiohydrolases that cut the disaccharide cellobiose from the non-reducing end of the cellulose polymer chain; (3) Beta-1,4-glucosidases which hydrolyze the cellobiose and other short cello-oligosaccharides to glucose. In Agaricus bisporus (White button mushroom), this protein is Exoglucanase (cel2).